The chain runs to 298 residues: tRNA pseudouridine synthase B (298 aa).

D46 serves as the catalytic Nucleophile.

It belongs to the pseudouridine synthase TruB family. Type 1 subfamily.

The catalysed reaction is uridine(55) in tRNA = pseudouridine(55) in tRNA. Responsible for synthesis of pseudouridine from uracil-55 in the psi GC loop of transfer RNAs. The sequence is that of tRNA pseudouridine synthase B from Paracoccus denitrificans (strain Pd 1222).